A 366-amino-acid polypeptide reads, in one-letter code: MSAISHHSLSHLNSTVSKRLMPTYSDPVVRIAVLDTGFDGSHPDFSHPRTAYFTGPFSDLPQPEKDEEPQLTRIKAYHDFCQPSPPGDRQGPPPQPHSMVDLAGHGTAIAGLILRLAPRAELVIGRVCHGVDSNELSAPDPSRVAAAIRWAITQKVHIINLSLGYRNQPLKELLPLRAALLEAQRSNILVFASTSNQGSHEPAAWPASDARFAIGVHSCNDMGSAPSGSSCKASENGYNFMAVGENLLVHRLAQKGGGFELVSGSSFATPVVVSVAALVLAFVWQEECKRERDEVGREVMLEDLGSLGGMGRVLMALGEKTAGSYWAVGMKLFWAGYREGDGRDPEKEEKEARRWAWGVLRGAVAY.

The Peptidase S8 domain occupies 1 to 321 (MSAISHHSLS…RVLMALGEKT (321 aa)). Catalysis depends on Asp35, which acts as the Charge relay system. The interval 79 to 98 (DFCQPSPPGDRQGPPPQPHS) is disordered. Over residues 83–96 (PSPPGDRQGPPPQP) the composition is skewed to pro residues. Active-site charge relay system residues include His105 and Ser266. The chain crosses the membrane as a helical span at residues 261 to 283 (LVSGSSFATPVVVSVAALVLAFV).

This sequence belongs to the peptidase S8 family.

The protein localises to the membrane. Its function is as follows. Serine protease involved in heterokaryon incompatibility, a process that ensures that during spontaneous vegetative cell fusion, only compatible cells from the same colony survive (non-self-recognition). In P.anserina, the het-q locus exists as 2 incompatible alleles, het-Q1 (AC B2AXJ5) and het-Q2 (this entry). Prevents cell fusion with strains containing the gasdermin-like protein het-Q1 by mediating proteolytic cleavage and maturation of het-Q1 during the allorecognition process, thereby triggering cell death. In Podospora anserina (Pleurage anserina), this protein is Subtilisin-like protease het-Q2.